The primary structure comprises 422 residues: ORC1-type DNA replication protein 13 (422 aa).

Residues 80–84, Tyr231, and Arg243 contribute to the ATP site; that span reads TGKTL.

This sequence belongs to the CDC6/cdc18 family.

Functionally, involved in regulation of DNA replication. This chain is ORC1-type DNA replication protein 13 (cdc6m), found in Haloarcula marismortui (strain ATCC 43049 / DSM 3752 / JCM 8966 / VKM B-1809) (Halobacterium marismortui).